A 131-amino-acid polypeptide reads, in one-letter code: Small ribosomal subunit protein uS9c (131 aa).

The protein belongs to the universal ribosomal protein uS9 family.

It localises to the plastid. The protein localises to the chloroplast. In Emiliania huxleyi (Coccolithophore), this protein is Small ribosomal subunit protein uS9c (rps9).